Here is a 247-residue protein sequence, read N- to C-terminus: 14-3-3 protein gamma-1 (247 aa).

It belongs to the 14-3-3 family. In terms of assembly, homodimer, and heterodimer with other family members.

Its subcellular location is the cytoplasm. In terms of biological role, adapter protein implicated in the regulation of a large spectrum of both general and specialized signaling pathways. Binds to a large number of partners, usually by recognition of a phosphoserine or phosphothreonine motif. Binding generally results in the modulation of the activity of the binding partner. The polypeptide is 14-3-3 protein gamma-1 (ywhag1) (Danio rerio (Zebrafish)).